The sequence spans 305 residues: GTPase Era (305 aa).

The Era-type G domain occupies 13–181 (RCGFVAIVGR…ESAVGRFLPE (169 aa)). Residues 21–28 (GRPNVGKS) are G1. 21–28 (GRPNVGKS) serves as a coordination point for GTP. Residues 47–51 (QTTRH) form a G2 region. The interval 68–71 (DTPG) is G3. GTP contacts are provided by residues 68-72 (DTPGM) and 130-133 (NKVD). Residues 130 to 133 (NKVD) form a G4 region. Positions 160–162 (LSA) are G5. One can recognise a KH type-2 domain in the interval 204 to 288 (VREKITRQLG…MLRLWVKVKR (85 aa)).

It belongs to the TRAFAC class TrmE-Era-EngA-EngB-Septin-like GTPase superfamily. Era GTPase family. As to quaternary structure, monomer.

It is found in the cytoplasm. It localises to the cell inner membrane. In terms of biological role, an essential GTPase that binds both GDP and GTP, with rapid nucleotide exchange. Plays a role in 16S rRNA processing and 30S ribosomal subunit biogenesis and possibly also in cell cycle regulation and energy metabolism. This chain is GTPase Era, found in Marinobacter nauticus (strain ATCC 700491 / DSM 11845 / VT8) (Marinobacter aquaeolei).